Here is a 242-residue protein sequence, read N- to C-terminus: UPF0309 protein BMEA_B0892 (242 aa).

The region spanning Ala-30 to Pro-214 is the SIS domain.

Belongs to the UPF0309 family.

This Brucella melitensis biotype 2 (strain ATCC 23457) protein is UPF0309 protein BMEA_B0892.